Consider the following 347-residue polypeptide: Heme A synthase (347 aa).

A run of 8 helical transmembrane segments spans residues 14–34 (VKIWLCICCIGILIMVFIGGI), 96–116 (FHRLLGRIVGLVFLIPFLYFM), 129–149 (FILIAFLILVQGVMGWYMVKS), 162–182 (LAMHLLLALAIFYLLWKHFLL), 199–219 (VFYIIISLITIQITCGALVAG), 260–280 (FIHEVIALLILIIAVITLLVL), 287–307 (MYLLLALLLIQLTLGILTFIY), and 311–331 (IILASLHQVTAFILFASSIYL). His-262 is a heme binding site. Residue His-317 coordinates heme.

The protein belongs to the COX15/CtaA family. Type 2 subfamily. Interacts with CtaB. The cofactor is heme b.

It is found in the cell membrane. It carries out the reaction Fe(II)-heme o + 2 A + H2O = Fe(II)-heme a + 2 AH2. It participates in porphyrin-containing compound metabolism; heme A biosynthesis; heme A from heme O: step 1/1. In terms of biological role, catalyzes the conversion of heme O to heme A by two successive hydroxylations of the methyl group at C8. The first hydroxylation forms heme I, the second hydroxylation results in an unstable dihydroxymethyl group, which spontaneously dehydrates, resulting in the formyl group of heme A. The polypeptide is Heme A synthase (Ehrlichia ruminantium (strain Gardel)).